Reading from the N-terminus, the 223-residue chain is Thiamine-phosphate synthase (223 aa).

4-amino-2-methyl-5-(diphosphooxymethyl)pyrimidine contacts are provided by residues 42–46 (QLRDK) and N83. The Mg(2+) site is built by D84 and D103. S122 serves as a coordination point for 4-amino-2-methyl-5-(diphosphooxymethyl)pyrimidine. Residue 148-150 (TPT) coordinates 2-[(2R,5Z)-2-carboxy-4-methylthiazol-5(2H)-ylidene]ethyl phosphate. Residue K151 coordinates 4-amino-2-methyl-5-(diphosphooxymethyl)pyrimidine. 2-[(2R,5Z)-2-carboxy-4-methylthiazol-5(2H)-ylidene]ethyl phosphate is bound at residue G179.

The protein belongs to the thiamine-phosphate synthase family. The cofactor is Mg(2+).

The catalysed reaction is 2-[(2R,5Z)-2-carboxy-4-methylthiazol-5(2H)-ylidene]ethyl phosphate + 4-amino-2-methyl-5-(diphosphooxymethyl)pyrimidine + 2 H(+) = thiamine phosphate + CO2 + diphosphate. The enzyme catalyses 2-(2-carboxy-4-methylthiazol-5-yl)ethyl phosphate + 4-amino-2-methyl-5-(diphosphooxymethyl)pyrimidine + 2 H(+) = thiamine phosphate + CO2 + diphosphate. It catalyses the reaction 4-methyl-5-(2-phosphooxyethyl)-thiazole + 4-amino-2-methyl-5-(diphosphooxymethyl)pyrimidine + H(+) = thiamine phosphate + diphosphate. Its pathway is cofactor biosynthesis; thiamine diphosphate biosynthesis; thiamine phosphate from 4-amino-2-methyl-5-diphosphomethylpyrimidine and 4-methyl-5-(2-phosphoethyl)-thiazole: step 1/1. Its function is as follows. Condenses 4-methyl-5-(beta-hydroxyethyl)thiazole monophosphate (THZ-P) and 2-methyl-4-amino-5-hydroxymethyl pyrimidine pyrophosphate (HMP-PP) to form thiamine monophosphate (TMP). The sequence is that of Thiamine-phosphate synthase from Mycolicibacterium paratuberculosis (strain ATCC BAA-968 / K-10) (Mycobacterium paratuberculosis).